A 1331-amino-acid polypeptide reads, in one-letter code: Serine/threonine-protein kinase SSK22 (1331 aa).

Residues 1034–1310 (WQKRSFIGGG…AVELLIDPWM (277 aa)) form the Protein kinase domain. Residues 1040–1048 (IGGGTFGQV) and lysine 1063 each bind ATP. Aspartate 1158 serves as the catalytic Proton acceptor.

The protein belongs to the protein kinase superfamily. STE Ser/Thr protein kinase family. MAP kinase kinase kinase subfamily. In terms of assembly, interacts with by SSK1.

It carries out the reaction L-seryl-[protein] + ATP = O-phospho-L-seryl-[protein] + ADP + H(+). The enzyme catalyses L-threonyl-[protein] + ATP = O-phospho-L-threonyl-[protein] + ADP + H(+). Functionally, kinase involved in a signal transduction pathway that is activated by changes in the osmolarity of the extracellular environment. Activates the PBS2 MAP kinase kinase by phosphorylation. The polypeptide is Serine/threonine-protein kinase SSK22 (SSK22) (Saccharomyces cerevisiae (strain ATCC 204508 / S288c) (Baker's yeast)).